The chain runs to 237 residues: ASEDGGRGPYVQADLAYAYEHITHDYPEPTAPNKNKISTVSDYFRNIRTRSVHPRVSVGYDFGGWRIAADYARYRKWNNNKYSVSIKELLRNKGNGNRTDLKAENQENGTFHAVSSLGLSAVYDFKLNDKFKPYIGARVAYGHVRHSIDSTKKTTEVTTILHGPGTTPTVYPGKNTQDAHRESDSIRRVGLGAVAGVGIDITPNLTLDAGYRYHYWGRLENTRFKTHEASLGVRYRF.

Ala-1 is a signal peptide.

This sequence belongs to the opacity porin family.

The protein resides in the cell outer membrane. Its function is as follows. Implicated in a number of adherence functions. OPA proteins are implicated in pathogenesis and are subject to phase variation. The sequence is that of Opacity protein opA57 (opaK) from Neisseria gonorrhoeae.